Reading from the N-terminus, the 591-residue chain is L-fucose isomerase (591 aa).

Active-site proton acceptor residues include E337 and D361. Mn(2+) is bound by residues E337, D361, and H528.

This sequence belongs to the L-fucose isomerase family. As to quaternary structure, homohexamer. Requires Mn(2+) as cofactor.

The protein resides in the cytoplasm. It catalyses the reaction L-fucose = L-fuculose. It participates in carbohydrate degradation; L-fucose degradation; L-lactaldehyde and glycerone phosphate from L-fucose: step 1/3. Converts the aldose L-fucose into the corresponding ketose L-fuculose. This chain is L-fucose isomerase, found in Escherichia coli (strain UTI89 / UPEC).